We begin with the raw amino-acid sequence, 444 residues long: Trigger factor (444 aa).

Residues 165–250 (GDFAKFDFEG…LHEIQELKIP (86 aa)) form the PPIase FKBP-type domain.

It belongs to the FKBP-type PPIase family. Tig subfamily.

It is found in the cytoplasm. The enzyme catalyses [protein]-peptidylproline (omega=180) = [protein]-peptidylproline (omega=0). Involved in protein export. Acts as a chaperone by maintaining the newly synthesized protein in an open conformation. Functions as a peptidyl-prolyl cis-trans isomerase. In Campylobacter jejuni subsp. jejuni serotype O:6 (strain 81116 / NCTC 11828), this protein is Trigger factor.